The primary structure comprises 580 residues: Arginine--tRNA ligase (580 aa).

A 'HIGH' region motif is present at residues Ala131–His141.

Belongs to the class-I aminoacyl-tRNA synthetase family. Monomer.

The protein resides in the cytoplasm. The enzyme catalyses tRNA(Arg) + L-arginine + ATP = L-arginyl-tRNA(Arg) + AMP + diphosphate. This Cereibacter sphaeroides (strain ATCC 17025 / ATH 2.4.3) (Rhodobacter sphaeroides) protein is Arginine--tRNA ligase.